The primary structure comprises 272 residues: 3-deoxy-manno-octulosonate cytidylyltransferase (272 aa).

This sequence belongs to the KdsB family.

It is found in the cytoplasm. It carries out the reaction 3-deoxy-alpha-D-manno-oct-2-ulosonate + CTP = CMP-3-deoxy-beta-D-manno-octulosonate + diphosphate. It participates in nucleotide-sugar biosynthesis; CMP-3-deoxy-D-manno-octulosonate biosynthesis; CMP-3-deoxy-D-manno-octulosonate from 3-deoxy-D-manno-octulosonate and CTP: step 1/1. The protein operates within bacterial outer membrane biogenesis; lipopolysaccharide biosynthesis. In terms of biological role, activates KDO (a required 8-carbon sugar) for incorporation into bacterial lipopolysaccharide in Gram-negative bacteria. The sequence is that of 3-deoxy-manno-octulosonate cytidylyltransferase from Verminephrobacter eiseniae (strain EF01-2).